A 445-amino-acid chain; its full sequence is MSHDGKEEPGIAKKINSVDDIIIKCQCWVQKNDEERLAEILSINTRKAPPKFYVHYVNYNKRLDEWITTDRINLDKEVLYPKLKATDEDNKKQKKKKATNTSETPQDSLQDGVDGFSRENTDVMDLDNLNVQGIKDENISHEDEIKKLRTSGSMTQNPHEVARVRNLNRIIMGKYEIEPWYFSPYPIELTDEDFIYIDDFTLQYFGSKKQYERYRKKCTLRHPPGNEIYRDDYVSFFEIDGRKQRTWCRNLCLLSKLFLDHKTLYYDVDPFLFYCMTRRDELGHHLVGYFSKEKESADGYNVACILTLPQYQRMGYGKLLIEFSYELSKKENKVGSPEKPLSDLGLLSYRAYWSDTLITLLVEHQKEITIDEISSMTSMTTTDILHTAKTLNILRYYKGQHIIFLNEDILDRYNRLKAKKRRTIDPNRLIWKPPVFTASQLRFAW.

At serine 17 the chain carries Phosphoserine. Positions 22 to 74 (IIKCQCWVQKNDEERLAEILSINTRKAPPKFYVHYVNYNKRLDEWITTDRINL) constitute a Tudor-knot domain. Residues 88–114 (EDNKKQKKKKATNTSETPQDSLQDGVD) form a disordered region. Over residues 99–109 (TNTSETPQDSL) the composition is skewed to polar residues. Residues 162–433 (ARVRNLNRII…IDPNRLIWKP (272 aa)) form the MYST-type HAT domain. The segment at 195–220 (IYIDDFTLQYFGSKKQYERYRKKCTL) adopts a C2HC MYST-type; degenerate zinc-finger fold. An ESA1-RPD3 motif motif is present at residues 245–266 (RTWCRNLCLLSKLFLDHKTLYY). An N6-acetyllysine; by autocatalysis modification is found at lysine 262. Acetyl-CoA-binding positions include 303 to 307 (ACILT) and 312 to 318 (QRMGYGK). Glutamate 338 functions as the Proton donor/acceptor in the catalytic mechanism. An acetyl-CoA-binding site is contributed by serine 342.

This sequence belongs to the MYST (SAS/MOZ) family. As to quaternary structure, component of the NuA4 histone acetyltransferase complex composed of at least ACT1, ARP4, EAF3, EAF5, EAF6, EAF7, EPL1, ESA1, SWC4, TRA1, VID21, YAF9 and YNG2. The complex interacts with histones H4 (HHF1 and HHF2), H3 (HHT1 and HHT2) and H2A (HTA1 and HTA2). In terms of processing, autoacetylation at Lys-262 is required for proper function.

The enzyme catalyses L-lysyl-[histone] + acetyl-CoA = N(6)-acetyl-L-lysyl-[histone] + CoA + H(+). The catalysed reaction is L-lysyl-[protein] + acetyl-CoA = N(6)-acetyl-L-lysyl-[protein] + CoA + H(+). It carries out the reaction 2-hydroxyisobutanoyl-CoA + L-lysyl-[protein] = N(6)-(2-hydroxyisobutanoyl)-L-lysyl-[protein] + CoA + H(+). It catalyses the reaction (2E)-butenoyl-CoA + L-lysyl-[protein] = N(6)-(2E)-butenoyl-L-lysyl-[protein] + CoA + H(+). Catalytic component of the NuA4 histone acetyltransferase (HAT), a multiprotein complex involved in epigenetic transcriptional activation of selected genes principally by acetylation of nucleosomal histones H4, H3, H2B, H2A and H2A variant H2A.Z. Acetylates histone H4 to form H4K5ac, H4K8ac, H4K12ac and H4K16ac, histone H3 to form H3K14ac, histone H2B to form H2BK16ac, histone H2A to form H2AK4ac and H2AK7ac, and histone variant H2A.Z to form H2A.ZK14ac. Acetylation of histones gives a specific tag for epigenetic transcription initiation and elongation. Acetylation of histone H4 is essential for DNA double-strand break repair through homologous recombination. Involved in cell cycle progression. Recruitment to promoters depends on H3K4me. Also acetylates non-histone proteins, such as ATG3 and PAH1. Regulates autophagy by acetylating ATG3, controlling interaction the interaction between ATG3 and ATG8 and ATG8 lipidation. Acts as a regulator of fatty-acid-induced triacylglycerol synthesis by catalyzing acetylation of PAH1, thereby promoting the synthesis of diacylglycerol. In addition to protein acetyltransferase, can use different acyl-CoA substrates, such as 2-hydroxyisobutanoyl-CoA (2-hydroxyisobutyryl-CoA) or (2E)-butenoyl-CoA (crotonyl-CoA), and is able to mediate protein 2-hydroxyisobutyrylation and crotonylation, respectively. Catalyzes histone crotonylation. This Saccharomyces cerevisiae (strain ATCC 204508 / S288c) (Baker's yeast) protein is Histone acetyltransferase ESA1.